Reading from the N-terminus, the 204-residue chain is VQ motif-containing protein 13 (204 aa).

Residues 1 to 12 show a composition bias toward basic and acidic residues; it reads MEKSPRYRDKAK. Residues 1-26 are disordered; that stretch reads MEKSPRYRDKAKNLLPSPSSCTTTPT. Residues 16–26 show a composition bias toward low complexity; that stretch reads PSPSSCTTTPT. Serine 17 is subject to Phosphoserine. The VQ motif lies at 46 to 55; it reads FKQVVQLLTG. The tract at residues 56 to 90 is disordered; sequence IPKNPTHQPDPRFPPFHSIPPIKAVTNKKQSSSFR. A phosphoserine mark is found at serine 73 and serine 128. The residue at position 131 (threonine 131) is a Phosphothreonine. Residues 133–204 form a disordered region; it reads LMSDPFYRPG…HSPAPSPHDH (72 aa). Over residues 143 to 152 the composition is skewed to low complexity; the sequence is SFSQSPSDSK. Residues serine 147 and serine 173 each carry the phosphoserine modification. A phosphothreonine mark is found at threonine 177 and threonine 192. Phosphoserine occurs at positions 196 and 200.

Post-translationally, phosphorylated on serine and threonine residues by MPK6.

It localises to the nucleus. Functionally, may modulate WRKY transcription factor activities. The chain is VQ motif-containing protein 13 from Arabidopsis thaliana (Mouse-ear cress).